A 405-amino-acid polypeptide reads, in one-letter code: Squamosa promoter-binding-like protein 6 (405 aa).

The SBP-type zinc-finger motif lies at Asn121 to Pro198. Zn(2+)-binding residues include Cys124, Cys129, Cys146, His149, Cys165, Cys168, His172, and Cys184. The short motif at Lys181–Lys197 is the Bipartite nuclear localization signal element.

The cofactor is Zn(2+).

It localises to the nucleus. Functionally, trans-acting factor that binds specifically to the consensus nucleotide sequence 5'-TNCGTACAA-3'. This chain is Squamosa promoter-binding-like protein 6 (SPL6), found in Arabidopsis thaliana (Mouse-ear cress).